The following is a 492-amino-acid chain: V-type proton ATPase subunit B 2 (492 aa).

This sequence belongs to the ATPase alpha/beta chains family. V-ATPase is a heteromultimeric enzyme composed of a peripheral catalytic V1 complex (main components: subunits A, B, C, D, E, and F) attached to an integral membrane V0 proton pore complex (main component: the proteolipid protein).

Non-catalytic subunit of the peripheral V1 complex of vacuolar ATPase. V-ATPase is responsible for acidifying a variety of intracellular compartments in eukaryotic cells. This chain is V-type proton ATPase subunit B 2, found in Acetabularia acetabulum (Mermaid's wine glass).